The sequence spans 969 residues: Levansucrase (969 aa).

A signal peptide spans 1 to 52 (MDITVNSQSNTVAPKQAECKKMRYSIRKVATVGATSALVGTLAFLGATQVKA). The span at 89–103 (SEAVESSVAHSEVAT) shows a compositional bias: low complexity. Positions 89–169 (SEAVESSVAH…STASSEAADT (81 aa)) are disordered. A compositionally biased stretch (polar residues) spans 106 to 116 (VTETQPSNTTP). Over residues 124-166 (SSTVVTSSSDATTPSATVAAVSAPAHTSEAAVEAPTSTASSEA) the composition is skewed to low complexity. 3 residues coordinate sucrose: Trp286, Asp287, and Ser356. Asp287 acts as the Nucleophile in catalysis. Residue Asp443 participates in Ca(2+) binding. 2 residues coordinate sucrose: Arg448 and Asp449. Ca(2+) is bound by residues Gln473, Asn512, and Asp544. Glu545 contributes to the sucrose binding site. Residue Glu547 is the Proton donor/acceptor of the active site. Arg565 lines the sucrose pocket. Disordered stretches follow at residues 746–843 (VKDG…VGDR) and 860–934 (IVAT…SEGS). Residues 747 to 758 (KDGKDKKADKPE) are compositionally biased toward basic and acidic residues. Residues 776–789 (KPGTSKPADNNQPS) are compositionally biased toward polar residues. Residues 872-910 (VKEESVTETEAPKPVKSEEKVQSHGVDKANEVTKSDESS) show a composition bias toward basic and acidic residues. Residues 924-934 (TPKTPSDSEGS) show a composition bias toward polar residues. Residues 938 to 958 (ILSILATIFAAIASLALLGYG) traverse the membrane as a helical segment.

This sequence belongs to the glycosyl hydrolase 68 family.

The protein resides in the cell membrane. The protein localises to the cell surface. The enzyme catalyses [6)-beta-D-fructofuranosyl-(2-&gt;](n) alpha-D-glucopyranoside + sucrose = [6)-beta-D-fructofuranosyl-(2-&gt;](n+1) alpha-D-glucopyranoside + D-glucose. Ca(2+) may play an important structural role and promote stability of levansucrase. In terms of biological role, catalyzes the synthesis of levan, a fructose polymer, by transferring the fructosyl moiety from sucrose to a growing acceptor molecule. Also displays sucrose hydrolase activity. This chain is Levansucrase, found in Streptococcus salivarius.